A 291-amino-acid polypeptide reads, in one-letter code: uncharacterized protein (291 aa).

Positions 1–58 (MDLKWLQTFIAAAESESFREAAEHLYLTQPAVSQHMRKLEDELDMRLFLHSGRRVVLT) constitute an HTH lysR-type domain. Positions 18–37 (FREAAEHLYLTQPAVSQHMR) form a DNA-binding region, H-T-H motif.

This sequence belongs to the LysR transcriptional regulatory family.

This is an uncharacterized protein from Bacillus subtilis (strain 168).